The sequence spans 340 residues: Guanine nucleotide-binding protein G(I)/G(S)/G(T) subunit beta-1 (340 aa).

N-acetylserine is present on serine 2. Serine 2 is modified (phosphoserine). WD repeat units lie at residues 46–94 (RTRR…HAIP), 95–140 (LRSS…RELA), 141–181 (GHTG…TTFT), 182–223 (GHTG…QTFT), 224–267 (GHES…YSHD), 268–309 (NIIC…GVLA), and 310–340 (GHDN…KIWN). Phosphohistidine is present on histidine 266.

This sequence belongs to the WD repeat G protein beta family. As to quaternary structure, g proteins are composed of 3 units, alpha, beta and gamma. The heterodimer formed by GNB1 and GNG2 interacts with ARHGEF5. The heterodimer formed by GNB1 and GNG2 interacts with GRK2. Forms a complex with GNAO1 and GNG3. Interacts with ARHGEF18 and RASD2. Forms complexes with TAS2R14 and G-proteins; these complexes play a role in the perception of bitterness. Component of the TAS2R14-GNAI1 complex, consisting of TAS2R14, GNAI1, GNB1 and GNG2. Component of the TAS2R14-GNAT3 complex, consisting of TAS2R14, GNAT3, GNB1 and GNG2. Component of the TAS2R14-GNAS2 complex, consisting of TAS2R14, GNAS2, GNB1 and GNG2. Phosphorylation at His-266 by NDKB contributes to G protein activation by increasing the high energetic phosphate transfer onto GDP.

Guanine nucleotide-binding proteins (G proteins) are involved as a modulator or transducer in various transmembrane signaling systems. The beta and gamma chains are required for the GTPase activity, for replacement of GDP by GTP, and for G protein-effector interaction. The protein is Guanine nucleotide-binding protein G(I)/G(S)/G(T) subunit beta-1 (GNB1) of Bos taurus (Bovine).